Here is a 212-residue protein sequence, read N- to C-terminus: Tubulin alpha chain (212 aa).

Residues asparagine 3 and asparagine 25 each coordinate GTP. Glutamate 51 is an active-site residue.

This sequence belongs to the tubulin family. In terms of assembly, dimer of alpha and beta chains. A typical microtubule is a hollow water-filled tube with an outer diameter of 25 nm and an inner diameter of 15 nM. Alpha-beta heterodimers associate head-to-tail to form protofilaments running lengthwise along the microtubule wall with the beta-tubulin subunit facing the microtubule plus end conferring a structural polarity. Microtubules usually have 13 protofilaments but different protofilament numbers can be found in some organisms and specialized cells. It depends on Mg(2+) as a cofactor.

Its subcellular location is the cytoplasm. The protein resides in the cytoskeleton. It carries out the reaction GTP + H2O = GDP + phosphate + H(+). Functionally, tubulin is the major constituent of microtubules, a cylinder consisting of laterally associated linear protofilaments composed of alpha- and beta-tubulin heterodimers. Microtubules grow by the addition of GTP-tubulin dimers to the microtubule end, where a stabilizing cap forms. Below the cap, tubulin dimers are in GDP-bound state, owing to GTPase activity of alpha-tubulin. The protein is Tubulin alpha chain (TUB-A) of Pneumocystis carinii.